The primary structure comprises 542 residues: Chaperonin GroEL (542 aa).

ATP-binding positions include 29–32 (TLGP), 86–90 (DGTTT), Gly-413, 476–478 (NAA), and Asp-492. Residues 523-542 (EPAAPAMPGGMDPSMMGGMM) form a disordered region. Low complexity predominate over residues 526 to 542 (APAMPGGMDPSMMGGMM).

This sequence belongs to the chaperonin (HSP60) family. As to quaternary structure, forms a cylinder of 14 subunits composed of two heptameric rings stacked back-to-back. Interacts with the co-chaperonin GroES.

The protein resides in the cytoplasm. It catalyses the reaction ATP + H2O + a folded polypeptide = ADP + phosphate + an unfolded polypeptide.. Together with its co-chaperonin GroES, plays an essential role in assisting protein folding. The GroEL-GroES system forms a nano-cage that allows encapsulation of the non-native substrate proteins and provides a physical environment optimized to promote and accelerate protein folding. This is Chaperonin GroEL from Streptococcus uberis (strain ATCC BAA-854 / 0140J).